Reading from the N-terminus, the 489-residue chain is Protein translocase subunit SecY (489 aa).

At Met-1–Pro-20 the chain is on the cytoplasmic side. The chain crosses the membrane as a helical span at residues Glu-21–Thr-47. Topologically, residues Leu-48–Leu-59 are extracellular. The segment at residues Phe-60–Leu-67 is an intramembrane region (helical). The chain crosses the membrane as a discontinuously helical span at residues Phe-60 to Val-88. Residues Ala-68 to Ile-79 lie within the membrane without spanning it. The segment at residues Gly-80 to Val-88 is an intramembrane region (helical). Over Leu-89–Val-110 the chain is Cytoplasmic. Residues Leu-111–Gly-135 form a helical membrane-spanning segment. Topologically, residues Asn-136–Val-153 are extracellular. Residues Gly-154–Ser-178 form a helical membrane-spanning segment. Residues Lys-179–Ser-184 lie on the Cytoplasmic side of the membrane. A helical membrane pass occupies residues Gly-185 to Phe-203. Over Ser-204–Gly-244 the chain is Extracellular. A helical transmembrane segment spans residues Gln-245–Arg-266. Residues Val-267–Ser-291 lie on the Cytoplasmic side of the membrane. Residues Val-292–Asn-313 traverse the membrane as a helical segment. The Extracellular portion of the chain corresponds to Ser-314–Ile-364. The helical transmembrane segment at Arg-365–Trp-384 threads the bilayer. Residues Val-385 to Val-427 are Cytoplasmic-facing. Residues Thr-428 to Gly-446 form a helical membrane-spanning segment. The Extracellular portion of the chain corresponds to Thr-447 to Ala-450. The chain crosses the membrane as a helical span at residues Val-451–Lys-465. At Leu-466 to Ser-488 the chain is on the cytoplasmic side.

The protein belongs to the SecY/SEC61-alpha family. Component of the Sec protein translocase complex. Heterotrimer consisting of alpha (SecY), beta (SecG) and gamma (SecE) subunits. The heterotrimers can form oligomers, although 1 heterotrimer is thought to be able to translocate proteins. Interacts with the ribosome. May interact with SecDF, and other proteins may be involved.

It is found in the cell membrane. Its function is as follows. The central subunit of the protein translocation channel SecYEG. Consists of two halves formed by TMs 1-5 and 6-10. These two domains form a lateral gate at the front which open onto the bilayer between TMs 2 and 7, and are clamped together by SecE at the back. The channel is closed by both a pore ring composed of hydrophobic SecY resides and a short helix (helix 2A) on the extracellular side of the membrane which forms a plug. The plug probably moves laterally to allow the channel to open. The ring and the pore may move independently. This chain is Protein translocase subunit SecY, found in Haloferax volcanii (strain ATCC 29605 / DSM 3757 / JCM 8879 / NBRC 14742 / NCIMB 2012 / VKM B-1768 / DS2) (Halobacterium volcanii).